We begin with the raw amino-acid sequence, 617 residues long: Elongation factor 4 (617 aa).

The region spanning 17-203 (ERIRNFCIIA…RVCELVPHPV (187 aa)) is the tr-type G domain. GTP contacts are provided by residues 29-34 (DHGKST) and 150-153 (NKID).

It belongs to the TRAFAC class translation factor GTPase superfamily. Classic translation factor GTPase family. LepA subfamily.

Its subcellular location is the cell membrane. It carries out the reaction GTP + H2O = GDP + phosphate + H(+). Functionally, required for accurate and efficient protein synthesis under certain stress conditions. May act as a fidelity factor of the translation reaction, by catalyzing a one-codon backward translocation of tRNAs on improperly translocated ribosomes. Back-translocation proceeds from a post-translocation (POST) complex to a pre-translocation (PRE) complex, thus giving elongation factor G a second chance to translocate the tRNAs correctly. Binds to ribosomes in a GTP-dependent manner. The chain is Elongation factor 4 from Corynebacterium urealyticum (strain ATCC 43042 / DSM 7109).